The chain runs to 455 residues: Deoxyribodipyrimidine photo-lyase (455 aa).

The Photolyase/cryptochrome alpha/beta domain occupies 2–131 (SVAVVLFTSD…ELHVHDAVVT (130 aa)). FAD is bound by residues tyrosine 219 and 231-235 (TSRLS). Interaction with DNA regions lie at residues 266 to 273 (QLAWRDFH) and 330 to 331 (NR). Residue 361 to 363 (DGD) participates in FAD binding. Glutamine 392 is a DNA binding site.

Belongs to the DNA photolyase class-1 family. Monomer. FAD is required as a cofactor. Coenzyme F420-(gamma-Glu)n serves as cofactor.

The enzyme catalyses cyclobutadipyrimidine (in DNA) = 2 pyrimidine residues (in DNA).. Functionally, involved in repair of UV radiation-induced DNA damage. Catalyzes the light-dependent monomerization (300-600 nm) of cyclobutyl pyrimidine dimers (in cis-syn configuration), which are formed between adjacent bases on the same DNA strand upon exposure to ultraviolet radiation. The protein is Deoxyribodipyrimidine photo-lyase (phr) of Streptomyces griseus.